The sequence spans 380 residues: O-phospho-L-seryl-tRNA:Cys-tRNA synthase (380 aa).

Pyridoxal 5'-phosphate is bound by residues 86–87, asparagine 192, and 215–217; these read AR and SGH. Lysine 218 carries the post-translational modification N6-(pyridoxal phosphate)lysine.

It belongs to the SepCysS family. In terms of assembly, homodimer. Interacts with SepRS. Pyridoxal 5'-phosphate is required as a cofactor.

The catalysed reaction is O-phospho-L-seryl-tRNA(Cys) + hydrogen sulfide + H(+) = L-cysteinyl-tRNA(Cys) + phosphate. Its function is as follows. Converts O-phospho-L-seryl-tRNA(Cys) (Sep-tRNA(Cys)) to L-cysteinyl-tRNA(Cys) (Cys-tRNA(Cys)). This chain is O-phospho-L-seryl-tRNA:Cys-tRNA synthase, found in Methanococcus maripaludis (strain DSM 14266 / JCM 13030 / NBRC 101832 / S2 / LL).